Reading from the N-terminus, the 118-residue chain is Alpha-amylase inhibitor 4 (118 aa).

Intrachain disulfides connect Cys7-Cys60, Cys21-Cys49, Cys30-Cys82, and Cys50-Cys101.

It belongs to the protease inhibitor I6 (cereal trypsin/alpha-amylase inhibitor) family.

It is found in the secreted. Alpha-amylase inhibitor. This chain is Alpha-amylase inhibitor 4, found in Sorghum bicolor (Sorghum).